Here is a 513-residue protein sequence, read N- to C-terminus: Na(+)/H(+) antiporter NhaB (513 aa).

Helical transmembrane passes span Leu23 to Ala43, Ile52 to Ile72, Leu97 to Phe117, Leu120 to Phe140, Phe144 to Ile164, Leu202 to Pro222, Phe238 to Leu258, Ala303 to Ile323, Thr348 to Ile368, Leu391 to Ile411, Ala447 to Ile467, and Val475 to Phe495.

This sequence belongs to the NhaB Na(+)/H(+) (TC 2.A.34) antiporter family.

The protein resides in the cell inner membrane. It carries out the reaction 2 Na(+)(in) + 3 H(+)(out) = 2 Na(+)(out) + 3 H(+)(in). Na(+)/H(+) antiporter that extrudes sodium in exchange for external protons. In Escherichia coli (strain 55989 / EAEC), this protein is Na(+)/H(+) antiporter NhaB.